The sequence spans 343 residues: MAAAAPGPVELGFAEEAPAWRLRSEQFPSKVGGRPAWLGLAELPGPGALACARCGRPLAFLLQVYAPLPGRDDAFHRSLFLFCCREPLCCAGLRVFRNQLPRNNAFYSYEPPSETEALGTECVCLQLKSGAHLCRVCGCLAPMTCSRCKQAHYCSKEHQTLDWRLGHKQACTQSDKIDHMVPDHNFLFPEFEIVTETEDEILPEVVEMEDYSEVTGSMGGIPEEELDSMAKHESKEDHIFQKFKSKIALEPEQILRYGRGIKPIWISGENIPQEKDIPDCPCGAKRIFEFQVMPQLLNHLKADRLGRSIDWGVLAVFTCAESCSLGSGYTEEFVWKQDVTDTP.

Positions 134, 137, 145, 148, 154, 158, 167, and 171 each coordinate Zn(2+). An MYND-type; atypical zinc finger spans residues 134–171 (CRVCGCLAPMTCSRCKQAHYCSKEHQTLDWRLGHKQAC).

Post-translationally, ubiquitinated by PRKN, promoting proteasomal degradation.

Its subcellular location is the nucleus. In terms of biological role, may be a DNA-binding protein with a regulatory function. May play an important role in cell death and/or in regulation of cell proliferation. The protein is Programmed cell death protein 2 (Pdcd2) of Mus musculus (Mouse).